The chain runs to 496 residues: Glycerol kinase (496 aa).

Threonine 12 lines the ADP pocket. ATP-binding residues include threonine 12, threonine 13, and serine 14. Residue threonine 12 coordinates sn-glycerol 3-phosphate. Arginine 16 is an ADP binding site. The sn-glycerol 3-phosphate site is built by arginine 82, glutamate 83, and tyrosine 134. The glycerol site is built by arginine 82, glutamate 83, and tyrosine 134. Residue histidine 230 is modified to Phosphohistidine; by HPr. Aspartate 244 contacts sn-glycerol 3-phosphate. Glycerol is bound by residues aspartate 244 and glutamine 245. Residues threonine 266 and glycine 309 each coordinate ADP. Residues threonine 266, glycine 309, glutamine 313, and glycine 410 each contribute to the ATP site. Residues glycine 410 and asparagine 414 each coordinate ADP.

It belongs to the FGGY kinase family. In terms of assembly, homotetramer and homodimer (in equilibrium). The phosphoenolpyruvate-dependent sugar phosphotransferase system (PTS), including enzyme I, and histidine-containing protein (HPr) are required for the phosphorylation, which leads to the activation of the enzyme.

The catalysed reaction is glycerol + ATP = sn-glycerol 3-phosphate + ADP + H(+). It participates in polyol metabolism; glycerol degradation via glycerol kinase pathway; sn-glycerol 3-phosphate from glycerol: step 1/1. Its activity is regulated as follows. Activated by phosphorylation and inhibited by fructose 1,6-bisphosphate (FBP). Its function is as follows. Key enzyme in the regulation of glycerol uptake and metabolism. Catalyzes the phosphorylation of glycerol to yield sn-glycerol 3-phosphate. In Bacillus cytotoxicus (strain DSM 22905 / CIP 110041 / 391-98 / NVH 391-98), this protein is Glycerol kinase.